The sequence spans 2335 residues: Histone-lysine N-methyltransferase ATXR3 (2335 aa).

Disordered regions lie at residues 30-142 (NESK…FKDE), 332-355 (STGN…SYAD), 371-556 (CSRS…SSSK), and 902-961 (DQVP…KTDT). Polar residues-rich tracts occupy residues 31–46 (ESKT…TSIA) and 53–62 (QPANKPSASS). Positions 65–84 (VKKKRIVKVIRKVVKRRPKQ) are enriched in basic residues. Positions 67 to 74 (KKRIVKVI) match the Nuclear localization signal 1 motif. Positions 97-112 (PPSQVVQLPAESQLQI) are enriched in polar residues. Basic and acidic residues-rich tracts occupy residues 340-353 (HGAE…KHSY), 371-390 (CSRS…RLYR), and 430-452 (WSPH…RERS). Residues 461–475 (HARKRSPRDRRHHDY) show a composition bias toward basic residues. Basic and acidic residues-rich tracts occupy residues 485–498 (SPHD…RRDY), 507–548 (QSDR…ESNG), and 910–921 (PRAKVRSKERCP). A Nuclear localization signal 2 motif is present at residues 527-534 (ERRDCQTG). Residues 922–932 (SRPARPSPASS) show a composition bias toward low complexity. The span at 941-961 (SHSQSTASTGQDSQGLWKTDT) shows a compositional bias: polar residues. The Nuclear localization signal 3 signature appears at 1382–1389 (ARRSSAIL). The interval 1532-1572 (NRKSFSSESDTSSELSDNGKSDNYSSASASESESDIRSEGR) is disordered. The segment covering 1535 to 1547 (SFSSESDTSSELS) has biased composition (low complexity). The SET domain occupies 1765-1904 (KEIESRSDDK…YGEEITFDYN (140 aa)). Cysteine 1868 contributes to the Zn(2+) binding site. Tyrosine 1903 is a binding site for S-adenosyl-L-methionine. The Post-SET domain occupies 1914-1930 (EASVCLCGSQVCRGSYL). Zn(2+) contacts are provided by cysteine 1918, cysteine 1920, and cysteine 1925.

The protein belongs to the class V-like SAM-binding methyltransferase superfamily. Histone-lysine methyltransferase family. TRX/MLL subfamily. In terms of tissue distribution, expressed in roots, leaves, stems and inflorescences.

It is found in the nucleus. It catalyses the reaction L-lysyl(4)-[histone H3] + 3 S-adenosyl-L-methionine = N(6),N(6),N(6)-trimethyl-L-lysyl(4)-[histone H3] + 3 S-adenosyl-L-homocysteine + 3 H(+). Its function is as follows. Histone methyltransferase specifically required for trimethylation of 'Lys-4' of histone H3 (H3K4me3) and is crucial for both sporophyte and gametophyte development. Function as a diurnal 'writer' to counteract the nocturne 'eraser' demethylase activity of JMJ14 thus orchestrating the circadian rhythm of histone modifications (e.g. H3K4me3) and modulating the rhythmic expression of diurnal target genes; this mechanism relies also on the circadian clock oscillators CCA1 and LHY. The chain is Histone-lysine N-methyltransferase ATXR3 from Arabidopsis thaliana (Mouse-ear cress).